The primary structure comprises 115 residues: Large ribosomal subunit protein uL24 (115 aa).

It belongs to the universal ribosomal protein uL24 family. In terms of assembly, part of the 50S ribosomal subunit.

One of two assembly initiator proteins, it binds directly to the 5'-end of the 23S rRNA, where it nucleates assembly of the 50S subunit. Functionally, one of the proteins that surrounds the polypeptide exit tunnel on the outside of the subunit. This is Large ribosomal subunit protein uL24 from Acaryochloris marina (strain MBIC 11017).